Consider the following 307-residue polypeptide: 1-aminocyclopropane-1-carboxylate oxidase 5 (307 aa).

Residues 106–134 (SNIKETMGEYREEVRKLASKMMEVMDENL) adopt a coiled-coil conformation. Residues 152–256 (GEETAFFGTK…RRSIASFYNP (105 aa)) enclose the Fe2OG dioxygenase domain. 3 residues coordinate Fe cation: H180, D182, and H237. R247 lines the 2-oxoglutarate pocket.

This sequence belongs to the iron/ascorbate-dependent oxidoreductase family. Requires Fe(2+) as cofactor.

It carries out the reaction 1-aminocyclopropane-1-carboxylate + L-ascorbate + O2 = ethene + L-dehydroascorbate + hydrogen cyanide + CO2 + 2 H2O. Its pathway is alkene biosynthesis; ethylene biosynthesis via S-adenosyl-L-methionine; ethylene from S-adenosyl-L-methionine: step 2/2. Enzyme involved in the ethylene biosynthesis. This is 1-aminocyclopropane-1-carboxylate oxidase 5 from Arabidopsis thaliana (Mouse-ear cress).